The sequence spans 224 residues: UPF0111 protein CPn_0681/CP_0066/CPj0681/CpB0708 (224 aa).

The protein belongs to the UPF0111 family.

The polypeptide is UPF0111 protein CPn_0681/CP_0066/CPj0681/CpB0708 (Chlamydia pneumoniae (Chlamydophila pneumoniae)).